The chain runs to 448 residues: Nicotinate phosphoribosyltransferase pncB1 (448 aa).

The interval M1–G21 is disordered. H212 bears the Phosphohistidine mark. Residues R353–A372 are disordered.

Belongs to the NAPRTase family. Transiently phosphorylated on a His residue during the reaction cycle. Phosphorylation strongly increases the affinity for substrates and increases the rate of nicotinate D-ribonucleotide production. Dephosphorylation regenerates the low-affinity form of the enzyme, leading to product release.

It catalyses the reaction nicotinate + 5-phospho-alpha-D-ribose 1-diphosphate + ATP + H2O = nicotinate beta-D-ribonucleotide + ADP + phosphate + diphosphate. It functions in the pathway cofactor biosynthesis; NAD(+) biosynthesis; nicotinate D-ribonucleotide from nicotinate: step 1/1. Functionally, involved in the Preiss-Handler pathway, which is a recycling route that permits the salvage of free nicotinamide (NM) and nicotinic acid (Na) involved in the NAD biosynthesis. Catalyzes the synthesis of beta-nicotinate D-ribonucleotide from nicotinate and 5-phospho-D-ribose 1-phosphate at the expense of ATP. It is not able to use nicotinamide. PncB1 contributes to basal NAD level. The sequence is that of Nicotinate phosphoribosyltransferase pncB1 (pncB1) from Mycobacterium tuberculosis (strain ATCC 25618 / H37Rv).